We begin with the raw amino-acid sequence, 703 residues long: Polyribonucleotide nucleotidyltransferase (703 aa).

The Mg(2+) site is built by aspartate 488 and aspartate 494. One can recognise a KH domain in the interval 555 to 614; it reads PKIVKMQINPDKIKDVIGPGGKIITKIIDETGVKIDIEQTGEVFISGIEIDMIKKAQELI. In terms of domain architecture, S1 motif spans 624–692; it reads GKTYKGKVSR…EKGRVNLSRK (69 aa).

Belongs to the polyribonucleotide nucleotidyltransferase family. Mg(2+) serves as cofactor.

The protein localises to the cytoplasm. The catalysed reaction is RNA(n+1) + phosphate = RNA(n) + a ribonucleoside 5'-diphosphate. Involved in mRNA degradation. Catalyzes the phosphorolysis of single-stranded polyribonucleotides processively in the 3'- to 5'-direction. This chain is Polyribonucleotide nucleotidyltransferase, found in Clostridioides difficile (strain 630) (Peptoclostridium difficile).